The chain runs to 296 residues: Antisense-enhancing sequence 1 (296 aa).

Residue Glu-47 is part of the active site.

This sequence belongs to the PhzF family.

Functionally, may have isomerase activity. Enhances target gene silencing when coexpressed with antisense RNA. This chain is Antisense-enhancing sequence 1 (aes1), found in Schizosaccharomyces pombe (strain 972 / ATCC 24843) (Fission yeast).